A 698-amino-acid chain; its full sequence is MMRSRSKSPRRPSPTARGANCDVELLKTTTRDREELKCMLEKYERHLAEIQGNVKVLKSERDKIFLLYEQAQEEITRLRREMMKSCKSPKSTTAHAILRRVETERDVAFTDLRRMTTERDSLRERLKIAQETAFNEKAHLEQRIEELECTVHNLDDERMEQMSNMTLMKETISTVEKEMKSLARKAMDTESELGRQKAENNSLRLLYENTEKDLSDTQRHLAKKKYELQLTQEKIMCLDEKIDNFTRQNIAQREEISILGGTLNDLAKEKECLQACLDKKSENIASLGESLAMKEKTISGMKNIIAEMEQASRQCTEALIVCEQDVSRMRRQLDETNDELAQIARERDILAHDNDNLQEQFAKAKQENQALSKKLNDTHNELNDIKQKVQDTNLEVNKLKNILKSEESENRQMMEQLRKANEDAENWENKARQSEADNNTLKLELITAEAEGNRLKEKVDSLNREVEQHLNAERSYKSQISTLHKSVVKMEEELQKVQFEKVSALADLSSTRELCIKLDSSKELLNRQLVAKDQEIEMRENELDSAHSEIELLRSQMANERISMQNLEALLVANRDKEYQSQIALQEKESEIQLLKEHLCLAENKMAIQSRDVAQFRNVVTQLEADLDITKRQLGTERFERERAVQELRRQNYSSNAYHMSSTMKPNTKCHSPERAHHRSPDRGLDRSLEENLCYRDF.

S163 carries the post-translational modification Phosphoserine. Positions 556–689 (QMANERISMQ…SPDRGLDRSL (134 aa)) are interaction with HIF1A. Residues 659-670 (HMSSTMKPNTKC) are compositionally biased toward polar residues. Residues 659–685 (HMSSTMKPNTKCHSPERAHHRSPDRGL) are disordered. Basic and acidic residues predominate over residues 671-685 (HSPERAHHRSPDRGL). Phosphoserine is present on S688.

This sequence belongs to the CEP135/TSGA10 family. Interacts with HIF1A. In terms of processing, processed into N-terminal 27-kDa and C-terminal 55-kDa fragments. As to expression, expressed in the testis, in spermatozoa (at protein level). Expressed in actively dividing fetal tissues, including sternum, intestine, limb, kidney and stomach.

The protein localises to the cytoplasm. The protein resides in the cytoskeleton. It is found in the microtubule organizing center. Its subcellular location is the centrosome. It localises to the centriole. Its function is as follows. Plays a role in spermatogenesis. When overexpressed, prevents nuclear localization of HIF1A. The sequence is that of Testis-specific gene 10 protein (TSGA10) from Homo sapiens (Human).